A 185-amino-acid chain; its full sequence is Peptidyl-tRNA hydrolase (185 aa).

TRNA is bound at residue tyrosine 14. Histidine 19 (proton acceptor) is an active-site residue. 3 residues coordinate tRNA: tyrosine 65, asparagine 67, and asparagine 113.

This sequence belongs to the PTH family. In terms of assembly, monomer.

The protein localises to the cytoplasm. It catalyses the reaction an N-acyl-L-alpha-aminoacyl-tRNA + H2O = an N-acyl-L-amino acid + a tRNA + H(+). In terms of biological role, hydrolyzes ribosome-free peptidyl-tRNAs (with 1 or more amino acids incorporated), which drop off the ribosome during protein synthesis, or as a result of ribosome stalling. Catalyzes the release of premature peptidyl moieties from peptidyl-tRNA molecules trapped in stalled 50S ribosomal subunits, and thus maintains levels of free tRNAs and 50S ribosomes. In Rickettsia akari (strain Hartford), this protein is Peptidyl-tRNA hydrolase.